The following is a 184-amino-acid chain: UPF0316 protein BPUM_0594 (184 aa).

The next 3 membrane-spanning stretches (helical) occupy residues 9-29 (AFTM…FSTM), 41-61 (AAAF…SIVL), and 67-87 (IQNV…GMKI).

The protein belongs to the UPF0316 family.

The protein localises to the cell membrane. In Bacillus pumilus (strain SAFR-032), this protein is UPF0316 protein BPUM_0594.